Here is a 268-residue protein sequence, read N- to C-terminus: Tryptophan synthase alpha chain (268 aa).

Catalysis depends on proton acceptor residues glutamate 49 and aspartate 60.

It belongs to the TrpA family. As to quaternary structure, tetramer of two alpha and two beta chains.

The catalysed reaction is (1S,2R)-1-C-(indol-3-yl)glycerol 3-phosphate + L-serine = D-glyceraldehyde 3-phosphate + L-tryptophan + H2O. It participates in amino-acid biosynthesis; L-tryptophan biosynthesis; L-tryptophan from chorismate: step 5/5. The alpha subunit is responsible for the aldol cleavage of indoleglycerol phosphate to indole and glyceraldehyde 3-phosphate. The chain is Tryptophan synthase alpha chain from Escherichia fergusonii (strain ATCC 35469 / DSM 13698 / CCUG 18766 / IAM 14443 / JCM 21226 / LMG 7866 / NBRC 102419 / NCTC 12128 / CDC 0568-73).